The sequence spans 487 residues: Glutamyl-tRNA(Gln) amidotransferase subunit A (487 aa).

Catalysis depends on charge relay system residues lysine 77 and serine 152. The Acyl-ester intermediate role is filled by serine 176.

Belongs to the amidase family. GatA subfamily. As to quaternary structure, heterotrimer of A, B and C subunits.

The catalysed reaction is L-glutamyl-tRNA(Gln) + L-glutamine + ATP + H2O = L-glutaminyl-tRNA(Gln) + L-glutamate + ADP + phosphate + H(+). In terms of biological role, allows the formation of correctly charged Gln-tRNA(Gln) through the transamidation of misacylated Glu-tRNA(Gln) in organisms which lack glutaminyl-tRNA synthetase. The reaction takes place in the presence of glutamine and ATP through an activated gamma-phospho-Glu-tRNA(Gln). The sequence is that of Glutamyl-tRNA(Gln) amidotransferase subunit A from Limosilactobacillus fermentum (strain NBRC 3956 / LMG 18251) (Lactobacillus fermentum).